The following is a 370-amino-acid chain: Phospho-2-dehydro-3-deoxyheptonate aldolase, phenylalanine-inhibited (370 aa).

This sequence belongs to the class-I DAHP synthase family.

It catalyses the reaction D-erythrose 4-phosphate + phosphoenolpyruvate + H2O = 7-phospho-2-dehydro-3-deoxy-D-arabino-heptonate + phosphate. It functions in the pathway metabolic intermediate biosynthesis; chorismate biosynthesis; chorismate from D-erythrose 4-phosphate and phosphoenolpyruvate: step 1/7. Inhibited by phenyalanine. Its function is as follows. Stereospecific condensation of phosphoenolpyruvate (PEP) and D-erythrose-4-phosphate (E4P) giving rise to 3-deoxy-D-arabino-heptulosonate-7-phosphate (DAHP). This is Phospho-2-dehydro-3-deoxyheptonate aldolase, phenylalanine-inhibited (ARO3) from Saccharomyces cerevisiae (strain ATCC 204508 / S288c) (Baker's yeast).